The following is a 289-amino-acid chain: 4-diphosphocytidyl-2-C-methyl-D-erythritol kinase (289 aa).

Residue Lys-13 is part of the active site. Position 101–111 (101–111 (PMGGGLGGGSS)) interacts with ATP. Asp-143 is an active-site residue.

It belongs to the GHMP kinase family. IspE subfamily.

The catalysed reaction is 4-CDP-2-C-methyl-D-erythritol + ATP = 4-CDP-2-C-methyl-D-erythritol 2-phosphate + ADP + H(+). It functions in the pathway isoprenoid biosynthesis; isopentenyl diphosphate biosynthesis via DXP pathway; isopentenyl diphosphate from 1-deoxy-D-xylulose 5-phosphate: step 3/6. Its function is as follows. Catalyzes the phosphorylation of the position 2 hydroxy group of 4-diphosphocytidyl-2C-methyl-D-erythritol. The protein is 4-diphosphocytidyl-2-C-methyl-D-erythritol kinase of Janthinobacterium sp. (strain Marseille) (Minibacterium massiliensis).